A 334-amino-acid polypeptide reads, in one-letter code: Ornithine carbamoyltransferase (334 aa).

Carbamoyl phosphate-binding positions include 56 to 59 (STRT), glutamine 83, arginine 107, and 134 to 137 (HPTQ). L-ornithine-binding positions include asparagine 168, aspartate 232, and 236–237 (SM). Residues 274-275 (CL) and arginine 320 contribute to the carbamoyl phosphate site.

This sequence belongs to the aspartate/ornithine carbamoyltransferase superfamily. OTCase family. As to quaternary structure, homotrimer.

The protein localises to the cytoplasm. It catalyses the reaction carbamoyl phosphate + L-ornithine = L-citrulline + phosphate + H(+). Its pathway is amino-acid biosynthesis; L-arginine biosynthesis; L-arginine from L-ornithine and carbamoyl phosphate: step 1/3. Reversibly catalyzes the transfer of the carbamoyl group from carbamoyl phosphate (CP) to the N(epsilon) atom of ornithine (ORN) to produce L-citrulline. The chain is Ornithine carbamoyltransferase (argI) from Salmonella typhimurium (strain LT2 / SGSC1412 / ATCC 700720).